Reading from the N-terminus, the 464-residue chain is ATP synthase subunit beta (464 aa).

ATP is bound at residue 154–161 (GGAGVGKT).

Belongs to the ATPase alpha/beta chains family. As to quaternary structure, F-type ATPases have 2 components, CF(1) - the catalytic core - and CF(0) - the membrane proton channel. CF(1) has five subunits: alpha(3), beta(3), gamma(1), delta(1), epsilon(1). CF(0) has three main subunits: a(1), b(2) and c(9-12). The alpha and beta chains form an alternating ring which encloses part of the gamma chain. CF(1) is attached to CF(0) by a central stalk formed by the gamma and epsilon chains, while a peripheral stalk is formed by the delta and b chains.

Its subcellular location is the cell membrane. It carries out the reaction ATP + H2O + 4 H(+)(in) = ADP + phosphate + 5 H(+)(out). In terms of biological role, produces ATP from ADP in the presence of a proton gradient across the membrane. The catalytic sites are hosted primarily by the beta subunits. The protein is ATP synthase subunit beta of Mycoplasmopsis synoviae (strain 53) (Mycoplasma synoviae).